The primary structure comprises 391 residues: 3-ketoacyl-CoA thiolase, peroxisomal (391 aa).

Cys-92 functions as the Acyl-thioester intermediate in the catalytic mechanism. Catalysis depends on proton acceptor residues His-335 and Cys-366.

This sequence belongs to the thiolase-like superfamily. Thiolase family. In terms of assembly, homodimer.

Its subcellular location is the peroxisome. It carries out the reaction an acyl-CoA + acetyl-CoA = a 3-oxoacyl-CoA + CoA. It participates in lipid metabolism; fatty acid metabolism. This chain is 3-ketoacyl-CoA thiolase, peroxisomal (FOX3), found in Encephalitozoon cuniculi (strain GB-M1) (Microsporidian parasite).